The chain runs to 513 residues: ATP synthase subunit alpha (513 aa).

G169–T176 lines the ATP pocket.

Belongs to the ATPase alpha/beta chains family. As to quaternary structure, F-type ATPases have 2 components, CF(1) - the catalytic core - and CF(0) - the membrane proton channel. CF(1) has five subunits: alpha(3), beta(3), gamma(1), delta(1), epsilon(1). CF(0) has three main subunits: a(1), b(2) and c(9-12). The alpha and beta chains form an alternating ring which encloses part of the gamma chain. CF(1) is attached to CF(0) by a central stalk formed by the gamma and epsilon chains, while a peripheral stalk is formed by the delta and b chains.

Its subcellular location is the cell inner membrane. It catalyses the reaction ATP + H2O + 4 H(+)(in) = ADP + phosphate + 5 H(+)(out). Its function is as follows. Produces ATP from ADP in the presence of a proton gradient across the membrane. The alpha chain is a regulatory subunit. The chain is ATP synthase subunit alpha from Cupriavidus necator (strain ATCC 17699 / DSM 428 / KCTC 22496 / NCIMB 10442 / H16 / Stanier 337) (Ralstonia eutropha).